The primary structure comprises 163 residues: uncharacterized protein (163 aa).

It belongs to the IMPDH/GMPR family.

This is an uncharacterized protein from Haemophilus influenzae (strain ATCC 51907 / DSM 11121 / KW20 / Rd).